The chain runs to 548 residues: Glucose-6-phosphate isomerase (548 aa).

The Proton donor role is filled by Glu-355. Residues His-386 and Lys-514 contribute to the active site.

The protein belongs to the GPI family.

The protein localises to the cytoplasm. It catalyses the reaction alpha-D-glucose 6-phosphate = beta-D-fructose 6-phosphate. Its pathway is carbohydrate biosynthesis; gluconeogenesis. It functions in the pathway carbohydrate degradation; glycolysis; D-glyceraldehyde 3-phosphate and glycerone phosphate from D-glucose: step 2/4. Its function is as follows. Catalyzes the reversible isomerization of glucose-6-phosphate to fructose-6-phosphate. In Proteus mirabilis (strain HI4320), this protein is Glucose-6-phosphate isomerase.